Here is a 1006-residue protein sequence, read N- to C-terminus: Unconventional myosin-Id (1006 aa).

Ala2 carries the post-translational modification N-acetylalanine. The Myosin motor domain occupies 9–695 (FGKADFVLMD…TLFTLEELRA (687 aa)). 102-109 (GESGAGKT) is an ATP binding site. Position 200 is a phosphoserine (Ser200). At Tyr536 the chain carries Phosphotyrosine. An actin-binding region spans residues 572–594 (MIALVDNLASKEPYYVRCIKPND). IQ domains are found at residues 699-719 (VRIV…MRYK) and 721-741 (TKAA…SYIH). Residues 812-1005 (GQRADLGLQR…RSGFILSVPG (194 aa)) form the TH1 domain.

This sequence belongs to the TRAFAC class myosin-kinesin ATPase superfamily. Myosin family. As to quaternary structure, interacts (via the two IQ motifs) with calmodulin. Binds an additional calmodulin chain via a third, C-terminal region. Interacts with F-actin.

The protein localises to the cytoplasm. It localises to the perikaryon. It is found in the cell projection. Its subcellular location is the dendrite. The protein resides in the early endosome. The protein localises to the cell cortex. Unconventional myosin that functions as actin-based motor protein with ATPase activity. Plays a role in endosomal protein trafficking, and especially in the transfer of cargo proteins from early to recycling endosomes. Required for normal planar cell polarity in ciliated tracheal cells, for normal rotational polarity of cilia, and for coordinated, unidirectional ciliary movement in the trachea. Required for normal, polarized cilia organization in brain ependymal epithelial cells. This is Unconventional myosin-Id (MYO1D) from Bos taurus (Bovine).